The sequence spans 265 residues: Eukaryotic translation initiation factor 3 subunit J (265 aa).

2 disordered regions span residues 1–113 (MPPS…DSDL) and 215–237 (SNEK…AAKT). The segment covering 27–45 (DEEDGDVLDSWDAADDSEV) has biased composition (acidic residues). Positions 43–95 (SEVEREKAAKAAEAKAKAEAEAAANKKSKAQRIAEHKTRRKAAEDEEDDESDE) form a coiled coil. Residues 46 to 62 (EREKAAKAAEAKAKAEA) show a composition bias toward basic and acidic residues. Acidic residues predominate over residues 86 to 97 (EDEEDDESDEDE). 2 stretches are compositionally biased toward basic and acidic residues: residues 98–113 (AEKR…DSDL) and 217–229 (EKMK…DKGS).

Belongs to the eIF-3 subunit J family. As to quaternary structure, component of the eukaryotic translation initiation factor 3 (eIF-3) complex.

It is found in the cytoplasm. Functionally, component of the eukaryotic translation initiation factor 3 (eIF-3) complex, which is involved in protein synthesis of a specialized repertoire of mRNAs and, together with other initiation factors, stimulates binding of mRNA and methionyl-tRNAi to the 40S ribosome. The eIF-3 complex specifically targets and initiates translation of a subset of mRNAs involved in cell proliferation. In Emericella nidulans (strain FGSC A4 / ATCC 38163 / CBS 112.46 / NRRL 194 / M139) (Aspergillus nidulans), this protein is Eukaryotic translation initiation factor 3 subunit J (hcr1).